A 187-amino-acid polypeptide reads, in one-letter code: Ribosome-recycling factor (187 aa).

This sequence belongs to the RRF family.

It localises to the cytoplasm. In terms of biological role, responsible for the release of ribosomes from messenger RNA at the termination of protein biosynthesis. May increase the efficiency of translation by recycling ribosomes from one round of translation to another. This chain is Ribosome-recycling factor, found in Methylobacterium sp. (strain 4-46).